We begin with the raw amino-acid sequence, 146 residues long: Ribonuclease H (146 aa).

Residues 1-143 (MRKKIIIYTD…CDYLARQAIK (143 aa)) form the RNase H type-1 domain. Residues aspartate 10, glutamate 48, aspartate 70, and aspartate 135 each contribute to the Mg(2+) site.

The protein belongs to the RNase H family. In terms of assembly, monomer. Mg(2+) serves as cofactor.

It localises to the cytoplasm. The enzyme catalyses Endonucleolytic cleavage to 5'-phosphomonoester.. Functionally, endonuclease that specifically degrades the RNA of RNA-DNA hybrids. This chain is Ribonuclease H, found in Prosthecochloris aestuarii (strain DSM 271 / SK 413).